The sequence spans 208 residues: Small ribosomal subunit protein uS4 (208 aa).

The region spanning 95 to 157 is the S4 RNA-binding domain; that stretch reads RRIDNVVYRA…DSLKKLIRSN (63 aa).

It belongs to the universal ribosomal protein uS4 family. As to quaternary structure, part of the 30S ribosomal subunit. Contacts protein S5. The interaction surface between S4 and S5 is involved in control of translational fidelity.

Its function is as follows. One of the primary rRNA binding proteins, it binds directly to 16S rRNA where it nucleates assembly of the body of the 30S subunit. With S5 and S12 plays an important role in translational accuracy. The sequence is that of Small ribosomal subunit protein uS4 from Borreliella burgdorferi (strain ATCC 35210 / DSM 4680 / CIP 102532 / B31) (Borrelia burgdorferi).